A 235-amino-acid chain; its full sequence is Large ribosomal subunit protein uL3 (235 aa).

At glutamine 151 the chain carries N5-methylglutamine.

This sequence belongs to the universal ribosomal protein uL3 family. Part of the 50S ribosomal subunit. Forms a cluster with proteins L14 and L19. Methylated by PrmB.

In terms of biological role, one of the primary rRNA binding proteins, it binds directly near the 3'-end of the 23S rRNA, where it nucleates assembly of the 50S subunit. The sequence is that of Large ribosomal subunit protein uL3 from Rhodospirillum rubrum (strain ATCC 11170 / ATH 1.1.1 / DSM 467 / LMG 4362 / NCIMB 8255 / S1).